Here is a 127-residue protein sequence, read N- to C-terminus: Turripeptide OL172 (127 aa).

The signal sequence occupies residues 1–20 (MFSTLIFLTAVTLLMMPSQT). Residues 42–43 (QR) constitute a propeptide that is removed on maturation. Pyrrolidone carboxylic acid is present on Gln44. Residues 73-75 (QRK) constitute a propeptide that is removed on maturation. Gln76 is subject to Pyrrolidone carboxylic acid. Residues 104-106 (QRK) constitute a propeptide that is removed on maturation. At Gln107 the chain carries Pyrrolidone carboxylic acid.

In terms of processing, the turripeptide OL172 conotoxin-like contains 2 disulfide bonds. Expressed by the venom duct.

It is found in the secreted. In terms of biological role, acts as a neurotoxin by inhibiting an ion channel. This is Turripeptide OL172 from Iotyrris olangoensis (Sea snail).